A 331-amino-acid chain; its full sequence is Anthranilate phosphoribosyltransferase (331 aa).

5-phospho-alpha-D-ribose 1-diphosphate-binding positions include glycine 78, 81 to 82 (GD), serine 86, 88 to 91 (NIST), 106 to 114 (KHGNKSITS), and serine 118. Residue glycine 78 coordinates anthranilate. Serine 90 is a Mg(2+) binding site. An anthranilate-binding site is contributed by asparagine 109. Anthranilate is bound at residue arginine 163. The Mg(2+) site is built by aspartate 222 and glutamate 223.

The protein belongs to the anthranilate phosphoribosyltransferase family. Homodimer. The cofactor is Mg(2+).

The enzyme catalyses N-(5-phospho-beta-D-ribosyl)anthranilate + diphosphate = 5-phospho-alpha-D-ribose 1-diphosphate + anthranilate. Its pathway is amino-acid biosynthesis; L-tryptophan biosynthesis; L-tryptophan from chorismate: step 2/5. Functionally, catalyzes the transfer of the phosphoribosyl group of 5-phosphorylribose-1-pyrophosphate (PRPP) to anthranilate to yield N-(5'-phosphoribosyl)-anthranilate (PRA). This is Anthranilate phosphoribosyltransferase from Staphylococcus epidermidis (strain ATCC 35984 / DSM 28319 / BCRC 17069 / CCUG 31568 / BM 3577 / RP62A).